A 600-amino-acid chain; its full sequence is Aspartate--tRNA(Asp/Asn) ligase (600 aa).

Glu174 lines the L-aspartate pocket. The tract at residues 198–201 (QLFK) is aspartate. L-aspartate is bound at residue Arg220. ATP contacts are provided by residues 220–222 (RDE) and Gln229. An L-aspartate-binding site is contributed by His457. Glu491 is a binding site for ATP. Arg498 is an L-aspartate binding site. 543–546 (GLDR) provides a ligand contact to ATP.

Belongs to the class-II aminoacyl-tRNA synthetase family. Type 1 subfamily. Homodimer.

The protein localises to the cytoplasm. The enzyme catalyses tRNA(Asx) + L-aspartate + ATP = L-aspartyl-tRNA(Asx) + AMP + diphosphate. Aspartyl-tRNA synthetase with relaxed tRNA specificity since it is able to aspartylate not only its cognate tRNA(Asp) but also tRNA(Asn). Reaction proceeds in two steps: L-aspartate is first activated by ATP to form Asp-AMP and then transferred to the acceptor end of tRNA(Asp/Asn). This Burkholderia ambifaria (strain ATCC BAA-244 / DSM 16087 / CCUG 44356 / LMG 19182 / AMMD) (Burkholderia cepacia (strain AMMD)) protein is Aspartate--tRNA(Asp/Asn) ligase.